A 338-amino-acid polypeptide reads, in one-letter code: Uroporphyrinogen decarboxylase (338 aa).

Residues 25–29 (RQAGR), F44, D75, Y146, S201, and H314 contribute to the substrate site.

Belongs to the uroporphyrinogen decarboxylase family. In terms of assembly, homodimer.

The protein resides in the cytoplasm. It carries out the reaction uroporphyrinogen III + 4 H(+) = coproporphyrinogen III + 4 CO2. It participates in porphyrin-containing compound metabolism; protoporphyrin-IX biosynthesis; coproporphyrinogen-III from 5-aminolevulinate: step 4/4. Its function is as follows. Catalyzes the decarboxylation of four acetate groups of uroporphyrinogen-III to yield coproporphyrinogen-III. The sequence is that of Uroporphyrinogen decarboxylase from Aquifex aeolicus (strain VF5).